The chain runs to 177 residues: MAERAPRGEVAVMVAVQSALVDRPGMLATARGLSHFGEHCIGWLILALLGAIALPRRRREWLVAGAGAFVAHAIAVLIKRLVRRQRPDHPAIAVNVDTPSQLSFPSAHATSTTAAALLMGRATGLPLPVVLVPPMALSRILLGVHYPSDVAVGVALGATVGAIVDSVGGGRQRARKR.

Transmembrane regions (helical) follow at residues 35 to 55 (HFGE…IALP), 62 to 82 (LVAG…KRLV), 124 to 144 (GLPL…LLGV), and 150 to 170 (VAVG…VGGG).

This sequence belongs to the PA-phosphatase related phosphoesterase family.

It localises to the cell membrane. It carries out the reaction trans,octa-cis-decaprenylphospho-beta-D-ribofuranose 5-phosphate + H2O = trans,octa-cis-decaprenylphospho-beta-D-ribofuranose + phosphate. It participates in cell wall biogenesis; cell wall polysaccharide biosynthesis. In terms of biological role, phosphatase involved in the biosynthesis of decaprenylphosphoryl arabinose (DPA), which serves as the arabinose donor for the biosynthesis of arabinogalactan, the major mycobacterial cell wall polysaccharide. Catalyzes the dephosphorylation of decaprenylphosphoryl-5-phosphoribose (DPPR) to decaprenyl-phosphoribose (DPR). This Mycobacterium tuberculosis (strain CDC 1551 / Oshkosh) protein is Decaprenylphosphoryl-5-phosphoribose phosphatase.